The primary structure comprises 113 residues: Immunoglobulin lambda variable 2-23 (113 aa).

An N-terminal signal peptide occupies residues Met-1–Ala-19. At Gln-20 the chain carries Pyrrolidone carboxylic acid. Positions Gln-20 to Thr-44 are framework-1. One can recognise an Ig-like domain in the interval Gln-20–Ala-113. Cys-41 and Cys-109 are joined by a disulfide. The segment at Ser-45–Leu-53 is complementarity-determining-1. A framework-2 region spans residues Val-54–Tyr-70. Residues Glu-71–Ser-73 form a complementarity-determining-2 region. The tract at residues Ser-73–Ala-92 is disordered. The segment at Lys-74 to Cys-109 is framework-3. Residues Gly-78 to Ala-92 are compositionally biased toward polar residues. A complementarity-determining-3 region spans residues Cys-110–Ala-113.

Immunoglobulins are composed of two identical heavy chains and two identical light chains; disulfide-linked.

It localises to the secreted. The protein resides in the cell membrane. In terms of biological role, v region of the variable domain of immunoglobulin light chains that participates in the antigen recognition. Immunoglobulins, also known as antibodies, are membrane-bound or secreted glycoproteins produced by B lymphocytes. In the recognition phase of humoral immunity, the membrane-bound immunoglobulins serve as receptors which, upon binding of a specific antigen, trigger the clonal expansion and differentiation of B lymphocytes into immunoglobulins-secreting plasma cells. Secreted immunoglobulins mediate the effector phase of humoral immunity, which results in the elimination of bound antigens. The antigen binding site is formed by the variable domain of one heavy chain, together with that of its associated light chain. Thus, each immunoglobulin has two antigen binding sites with remarkable affinity for a particular antigen. The variable domains are assembled by a process called V-(D)-J rearrangement and can then be subjected to somatic hypermutations which, after exposure to antigen and selection, allow affinity maturation for a particular antigen. This is Immunoglobulin lambda variable 2-23 from Homo sapiens (Human).